Here is a 449-residue protein sequence, read N- to C-terminus: Zinc finger and BTB domain-containing protein 14 (449 aa).

Residues 36-102 (CDIAIVVEDV…MYTAKISVKK (67 aa)) form the BTB domain. Residue Lys46 forms a Glycyl lysine isopeptide (Lys-Gly) (interchain with G-Cter in SUMO2) linkage. A Nuclear localization signal motif is present at residues 50 to 66 (HRCVLAACSTYFKKLFK). The interval 153 to 194 (GDAADTQDDDVEEIGDQDDSPSDDTVEGTPPSQEDGKSPTTT) is disordered. Acidic residues predominate over residues 157-178 (DTQDDDVEEIGDQDDSPSDDTV). Glycyl lysine isopeptide (Lys-Gly) (interchain with G-Cter in SUMO2) cross-links involve residues Lys203 and Lys249. 5 C2H2-type zinc fingers span residues 277–304 (IACQACGKTFSDEGRLRKHEKLHTADRP), 305–332 (FVCEMCTKGFTTQAHLKEHLKIHTGYKP), 333–360 (YSCEVCGKSFIRAPDLKKHERVHSNERP), 361–388 (FACHMCDKAFKHKSHLKDHERRHRGEKP), and 389–417 (FVCGSCTKAFAKASDLKRHENNMHSERKQ).

It belongs to the krueppel C2H2-type zinc-finger protein family. In terms of assembly, interacts with ZBTB21.

It localises to the nucleus. Transcriptional activator of the dopamine transporter (DAT), binding it's promoter at the consensus sequence 5'-CCTGCACAGTTCACGGA-3'. Binds to 5'-d(GCC)(n)-3' trinucleotide repeats in promoter regions and acts as a repressor of the FMR1 gene. Transcriptional repressor of MYC and thymidine kinase promoters. The polypeptide is Zinc finger and BTB domain-containing protein 14 (ZBTB14) (Homo sapiens (Human)).